A 427-amino-acid polypeptide reads, in one-letter code: Trigger factor (427 aa).

One can recognise a PPIase FKBP-type domain in the interval 163–248 (GDTVVIDFVG…VHEVKAKEVP (86 aa)).

Belongs to the FKBP-type PPIase family. Tig subfamily.

The protein localises to the cytoplasm. The enzyme catalyses [protein]-peptidylproline (omega=180) = [protein]-peptidylproline (omega=0). Involved in protein export. Acts as a chaperone by maintaining the newly synthesized protein in an open conformation. Functions as a peptidyl-prolyl cis-trans isomerase. The protein is Trigger factor of Streptococcus equi subsp. zooepidemicus (strain H70).